Consider the following 646-residue polypeptide: MAGAPLIRLEDICKTFHNGDLAVEVLHGITLDIRAGEFVAIMGASGSGKSTLMNILGCLDTPTGGRYLLDGEDVSTLNADELATLRRRTFGFVFQSYNLIPTSTAQENVEVPAIYAGTPAAERRKRAAALLNALKLGDRLDHRPSQLSGGQQQRISIARALMNGGRIILADEPTGALDSQSGEDVMELLRSMHQQGHTVIVITHAREVAERADRLIEIRDGQILSDTTKRDIHTPEATLQPHEEIAGNGAHIADISEAVKMALHALRANIFRTVLTLLGIIIGVSSVVTMLAIGTGAQNTILDRINAMGTDLILVRPAMAGFRGSGSIATLVPQDADAILELPNVKSAVPEVTGTVTLRRGNVDYQSQANGTVPAFSSEIVESRQRQLHHPERYRYLRPCGWLGTTVVKTLFPDGGNPVGDYILIQKIPFQIIGTLEPKGAGFGGSDQDDVVVVPLSTGNLRLFGQKYVRSITVQVKDSSLIDTTQNQIQSLLDQRHKKRDTMITNMSSVREDAAAMGKTMTVFLGSVAAISLLVGGIGVMNIMLVSVTERTREIGVRMATGARRRDILLQFIIEALSVSAIGGAIGVILGLGAAALASWAGLSVGYSFGPVLLAFACAFATGLIFGFLPARKASRLLPAVALSSE.

In terms of domain architecture, ABC transporter spans 7 to 245; sequence IRLEDICKTF…EATLQPHEEI (239 aa). 43 to 50 serves as a coordination point for ATP; the sequence is GASGSGKS. The next 4 helical transmembrane spans lie at 274-294, 528-548, 572-592, and 609-629; these read VLTLLGIIIGVSSVVTMLAIG, VAAISLLVGGIGVMNIMLVSV, FIIEALSVSAIGGAIGVILGL, and FGPVLLAFACAFATGLIFGFL.

This sequence belongs to the ABC transporter superfamily. Macrolide exporter (TC 3.A.1.122) family. Homodimer.

It localises to the cell inner membrane. In terms of biological role, non-canonical ABC transporter that contains transmembrane domains (TMD), which form a pore in the inner membrane, and an ATP-binding domain (NBD), which is responsible for energy generation. Confers resistance against macrolides. This Brucella abortus (strain 2308) protein is Macrolide export ATP-binding/permease protein MacB.